The following is a 264-amino-acid chain: uncharacterized protein (264 aa).

A signal peptide spans 1-16 (MKGKSALTLLLAGIFS). Cys17 carries the N-palmitoyl cysteine lipid modification. Cys17 carries the S-diacylglycerol cysteine lipid modification.

Its subcellular location is the cell inner membrane. This is an uncharacterized protein from Escherichia coli (strain K12).